Here is a 302-residue protein sequence, read N- to C-terminus: Large ribosomal subunit protein uL29m (302 aa).

The N-terminal 38 residues, 1 to 38 (MASSGAARPAASRVLQRCQPFSSSTSCAAPVTTWRTLA), are a transit peptide targeting the mitochondrion. Positions 255–302 (EPVADHLETPETSGQEKVGELSPAGAVDPSTILASKTGKPVTDAPRSS) are disordered.

The protein belongs to the universal ribosomal protein uL29 family. Component of the mitochondrial large ribosomal subunit. Mature mitochondrial ribosomes consist of a small (37S) and a large (54S) subunit. The 37S subunit contains at least 33 different proteins and 1 molecule of RNA (15S). The 54S subunit contains at least 45 different proteins and 1 molecule of RNA (21S).

The protein resides in the mitochondrion. The chain is Large ribosomal subunit protein uL29m (MRPL4) from Pyricularia oryzae (strain 70-15 / ATCC MYA-4617 / FGSC 8958) (Rice blast fungus).